The chain runs to 427 residues: 3-phosphoshikimate 1-carboxyvinyltransferase (427 aa).

Residues K21, S22, and R26 each contribute to the 3-phosphoshikimate site. K21 is a phosphoenolpyruvate binding site. The phosphoenolpyruvate site is built by G93 and R121. S166, Q168, D314, and K341 together coordinate 3-phosphoshikimate. Q168 is a binding site for phosphoenolpyruvate. Residue D314 is the Proton acceptor of the active site. Residues R345 and R387 each contribute to the phosphoenolpyruvate site.

Belongs to the EPSP synthase family. In terms of assembly, monomer.

It localises to the cytoplasm. The enzyme catalyses 3-phosphoshikimate + phosphoenolpyruvate = 5-O-(1-carboxyvinyl)-3-phosphoshikimate + phosphate. It participates in metabolic intermediate biosynthesis; chorismate biosynthesis; chorismate from D-erythrose 4-phosphate and phosphoenolpyruvate: step 6/7. Its function is as follows. Catalyzes the transfer of the enolpyruvyl moiety of phosphoenolpyruvate (PEP) to the 5-hydroxyl of shikimate-3-phosphate (S3P) to produce enolpyruvyl shikimate-3-phosphate and inorganic phosphate. In Alkaliphilus oremlandii (strain OhILAs) (Clostridium oremlandii (strain OhILAs)), this protein is 3-phosphoshikimate 1-carboxyvinyltransferase.